The sequence spans 184 residues: GTP cyclohydrolase 1 (184 aa).

Zn(2+) contacts are provided by C75, H78, and C146.

It belongs to the GTP cyclohydrolase I family. Homomer.

It carries out the reaction GTP + H2O = 7,8-dihydroneopterin 3'-triphosphate + formate + H(+). The protein operates within cofactor biosynthesis; 7,8-dihydroneopterin triphosphate biosynthesis; 7,8-dihydroneopterin triphosphate from GTP: step 1/1. The polypeptide is GTP cyclohydrolase 1 (Streptococcus pneumoniae serotype 19F (strain G54)).